Here is a 264-residue protein sequence, read N- to C-terminus: MNTKLSLSQTKIFTFTTWFNDTRSGLDRRSSISPTLCSKPVYSGKLKAAKETARIETSNTKNASIEDSFFSKIAINYLSKNLQDAAGISSSSKSTDYDRLVDTATRVSRNFDTKQQHEFVLSSLDRALPTVISSLIKMAFPPSKVSRELFALFTTISFAWLVGPSEVRETEVNGRKEKSVVYIEKCRFLEQSNCVGMCTHICKIPSQIFIKNSLGMPIYMEPDFNDLSCKMMFGREPPEIEDDPAMKQPCFEFCKSNKSYGVKH.

A chloroplast-targeting transit peptide spans 1–47 (MNTKLSLSQTKIFTFTTWFNDTRSGLDRRSSISPTLCSKPVYSGKLK).

It depends on Fe cation as a cofactor. Expressed in hypocotyls and shoots. Expressed at low levels in roots.

Its subcellular location is the plastid. The protein localises to the chloroplast. It carries out the reaction all-trans-beta-carotene = 9-cis-beta-carotene. Involved in strigolactones biosynthesis by catalyzing the isomerization of the C9-C10 double bond in all-trans-beta-carotene leading to 9-cis-beta-carotene and providing the substrate for CCD7. Strigolactones are hormones that inhibit tillering and shoot branching through the MAX-dependent pathway, contribute to the regulation of shoot architectural response to phosphate-limiting conditions and function as rhizosphere signal that stimulates hyphal branching of arbuscular mycorrhizal fungi and trigger seed germination of root parasitic weeds. This is Beta-carotene isomerase D27, chloroplastic (D27) from Arabidopsis thaliana (Mouse-ear cress).